A 191-amino-acid polypeptide reads, in one-letter code: Peptidyl-tRNA hydrolase (191 aa).

Y17 is a binding site for tRNA. The Proton acceptor role is filled by H22. TRNA contacts are provided by Y68, N70, and N116.

It belongs to the PTH family. Monomer.

It localises to the cytoplasm. The enzyme catalyses an N-acyl-L-alpha-aminoacyl-tRNA + H2O = an N-acyl-L-amino acid + a tRNA + H(+). In terms of biological role, hydrolyzes ribosome-free peptidyl-tRNAs (with 1 or more amino acids incorporated), which drop off the ribosome during protein synthesis, or as a result of ribosome stalling. Its function is as follows. Catalyzes the release of premature peptidyl moieties from peptidyl-tRNA molecules trapped in stalled 50S ribosomal subunits, and thus maintains levels of free tRNAs and 50S ribosomes. This chain is Peptidyl-tRNA hydrolase, found in Mycobacterium avium (strain 104).